The sequence spans 348 residues: Trace amine-associated receptor 9 (348 aa).

The Extracellular portion of the chain corresponds to 1-33 (MTSDFSPEPPMELCYENVNGSCIKSSYAPWPRA). N-linked (GlcNAc...) asparagine glycosylation is present at Asn-19. Disulfide bonds link Cys-22–Cys-186 and Cys-105–Cys-190. Residues 34 to 58 (ILYGVLGLGALLAVFGNLLVIIAIL) traverse the membrane as a helical segment. Over 59 to 68 (HFKQLHTPTN) the chain is Cytoplasmic. A helical membrane pass occupies residues 69–90 (FLVASLACADFLVGVTVMPFST). Residues 91 to 105 (VRSVESCWYFGESYC) are Extracellular-facing. Residues 106–128 (KFHTCFDTSFCFASLFHLCCISI) traverse the membrane as a helical segment. Positions 112 and 113 each coordinate spermidine. Residues 129-148 (DRYIAVTDPLTYPTKFTVSV) lie on the Cytoplasmic side of the membrane. Residues 149–170 (SGLCIALSWFFSVTYSFSIFYT) traverse the membrane as a helical segment. At 171 to 196 (GANEEGIEELVVALTCVGGCQAPLNQ) the chain is on the extracellular side. An extracellular Loop 2 (ECL2) region spans residues 174–187 (EEGIEELVVALTCV). The chain crosses the membrane as a helical span at residues 197–218 (NWVLLCFLLFFLPTVVMVFLYG). Over 219–256 (RIFLVAKYQARKIEGTANQAQASSESYKERVAKRERKA) the chain is Cytoplasmic. A helical transmembrane segment spans residues 257–280 (AKTLGIAMAAFLVSWLPYIIDAVI). Residues 281–293 (DAYMNFITPAYVY) are Extracellular-facing. Residues 294–314 (EILVWCVYYNSAMNPLIYAFF) form a helical membrane-spanning segment. The Cytoplasmic segment spans residues 315-348 (YPWFRKAIKLIVSGKVFRADSSTTNLFSEEAGAG).

Belongs to the G-protein coupled receptor 1 family. Specifically expressed in neurons of the olfactory epithelium.

It is found in the cell membrane. Its function is as follows. Olfactory receptor specific for trace amines, such as triethylamine, N,N-dimethylcyclohexylamine (DMCHA), beta-phenylethylamine (beta-PEA), cadaverine (CAD) and polyamines such as spermine and spermidine. Trace amine compounds are enriched in animal body fluids and act on trace amine-associated receptors (TAARs) to elicit both intraspecific and interspecific innate behaviors. Trace amine-binding causes a conformation change that triggers signaling via G(s)-class of G alpha proteins (GNAL or GNAS). In mature olfactory sensory neurons, Taar9 is coupled with GNAL/G(olf)G alpha protein and mediates activation of adenylate cyclase activity to activate cAMP signaling and eventually transmit odorant signals to achieve membrane depolarization. In immature olfactory sensory neurons, Taar9 is coupled with GNAS/G(s) G alpha proteins. The chain is Trace amine-associated receptor 9 from Mus musculus (Mouse).